Here is a 431-residue protein sequence, read N- to C-terminus: Adenylosuccinate lyase (431 aa).

N(6)-(1,2-dicarboxyethyl)-AMP-binding positions include 4–5 (RY), 67–69 (RHD), and 93–94 (TS). His141 functions as the Proton donor/acceptor in the catalytic mechanism. Gln212 provides a ligand contact to N(6)-(1,2-dicarboxyethyl)-AMP. The active-site Proton donor/acceptor is the Ser262. N(6)-(1,2-dicarboxyethyl)-AMP contacts are provided by residues Ser263, 268–270 (KRN), and 307–311 (SVERV).

Belongs to the lyase 1 family. Adenylosuccinate lyase subfamily. As to quaternary structure, homooligomer. Residues from neighboring subunits contribute catalytic and substrate-binding residues to each active site.

It carries out the reaction N(6)-(1,2-dicarboxyethyl)-AMP = fumarate + AMP. It catalyses the reaction (2S)-2-[5-amino-1-(5-phospho-beta-D-ribosyl)imidazole-4-carboxamido]succinate = 5-amino-1-(5-phospho-beta-D-ribosyl)imidazole-4-carboxamide + fumarate. The protein operates within purine metabolism; AMP biosynthesis via de novo pathway; AMP from IMP: step 2/2. Its pathway is purine metabolism; IMP biosynthesis via de novo pathway; 5-amino-1-(5-phospho-D-ribosyl)imidazole-4-carboxamide from 5-amino-1-(5-phospho-D-ribosyl)imidazole-4-carboxylate: step 2/2. In terms of biological role, catalyzes two reactions in de novo purine nucleotide biosynthesis. Catalyzes the breakdown of 5-aminoimidazole- (N-succinylocarboxamide) ribotide (SAICAR or 2-[5-amino-1-(5-phospho-beta-D-ribosyl)imidazole-4-carboxamido]succinate) to 5-aminoimidazole-4-carboxamide ribotide (AICAR or 5-amino-1-(5-phospho-beta-D-ribosyl)imidazole-4-carboxamide) and fumarate, and of adenylosuccinate (ADS or N(6)-(1,2-dicarboxyethyl)-AMP) to adenosine monophosphate (AMP) and fumarate. This Synechocystis sp. (strain ATCC 27184 / PCC 6803 / Kazusa) protein is Adenylosuccinate lyase (purB).